We begin with the raw amino-acid sequence, 253 residues long: Trans-aconitate 2-methyltransferase (253 aa).

It belongs to the methyltransferase superfamily. Tam family.

The protein localises to the cytoplasm. It carries out the reaction trans-aconitate + S-adenosyl-L-methionine = (E)-3-(methoxycarbonyl)pent-2-enedioate + S-adenosyl-L-homocysteine. Catalyzes the S-adenosylmethionine monomethyl esterification of trans-aconitate. This Azoarcus sp. (strain BH72) protein is Trans-aconitate 2-methyltransferase.